The primary structure comprises 223 residues: UPF0441 protein YgiB (223 aa).

Residues 178–195 (TVPKTAMAPKPATTTTVT) show a composition bias toward low complexity. Positions 178-223 (TVPKTAMAPKPATTTTVTRGGFGESVAKQSTMQRSAAGTSTRSMGG) are disordered. A compositionally biased stretch (polar residues) spans 204 to 223 (AKQSTMQRSAAGTSTRSMGG).

The protein belongs to the UPF0441 family.

The chain is UPF0441 protein YgiB from Salmonella paratyphi A (strain ATCC 9150 / SARB42).